We begin with the raw amino-acid sequence, 522 residues long: Lysine--tRNA ligase (522 aa).

The 'HIGH' region signature appears at 44–52 (PSGLPHIGT). The short motif at 290 to 294 (KISKS) is the 'KMSKS' region element. An ATP-binding site is contributed by Lys-293.

This sequence belongs to the class-I aminoacyl-tRNA synthetase family.

The protein localises to the cytoplasm. The enzyme catalyses tRNA(Lys) + L-lysine + ATP = L-lysyl-tRNA(Lys) + AMP + diphosphate. The polypeptide is Lysine--tRNA ligase (Rickettsia massiliae (strain Mtu5)).